The following is a 789-amino-acid chain: Transducer protein Htr6 (789 aa).

Helical transmembrane passes span 29 to 49 and 294 to 314; these read FAVAFIVVLVVIAGAGVFAFQ and TVTVLVVLAVISLAIVGIALG. HAMP domains lie at 315 to 367 and 409 to 462; these read RHTV…DRIQ and ERLQ…ATIA. Residues 481–717 enclose the Methyl-accepting transducer domain; that stretch reads GAEEIETTSQ…SVVRRVDDVA (237 aa). Residues 763-789 are disordered; the sequence is NQFETRADADEPDADTTVDASADDTGD. Over residues 772–789 the composition is skewed to acidic residues; it reads DEPDADTTVDASADDTGD.

It belongs to the methyl-accepting chemotaxis (MCP) protein family. Methylated by CheR.

It is found in the cell membrane. In terms of biological role, potentially involved in chemo- or phototactic signal transduction. This chain is Transducer protein Htr6 (htr6), found in Halobacterium salinarum (strain ATCC 29341 / DSM 671 / R1).